The sequence spans 356 residues: Tetraacyldisaccharide 4'-kinase (356 aa).

51 to 58 (GWGGSGKT) provides a ligand contact to ATP.

The protein belongs to the LpxK family.

The enzyme catalyses a lipid A disaccharide + ATP = a lipid IVA + ADP + H(+). The protein operates within glycolipid biosynthesis; lipid IV(A) biosynthesis; lipid IV(A) from (3R)-3-hydroxytetradecanoyl-[acyl-carrier-protein] and UDP-N-acetyl-alpha-D-glucosamine: step 6/6. Transfers the gamma-phosphate of ATP to the 4'-position of a tetraacyldisaccharide 1-phosphate intermediate (termed DS-1-P) to form tetraacyldisaccharide 1,4'-bis-phosphate (lipid IVA). The chain is Tetraacyldisaccharide 4'-kinase from Oleidesulfovibrio alaskensis (strain ATCC BAA-1058 / DSM 17464 / G20) (Desulfovibrio alaskensis).